Reading from the N-terminus, the 146-residue chain is MQKIPSFISRFIQDNHVVNFAAYTIDDFWTASCFYAFDHNMARLILLTSKNTRHSQIMLHNPKIVGTISAQITDIQAIKGIQFSATSQLLTKQDTEYHSSLTHYYQRHPFARLTSSDVWLLHLDMIKYTSNEYLFAQKSIWQRHTE.

Belongs to the UPF0306 family.

The protein is UPF0306 protein HD_1359 of Haemophilus ducreyi (strain 35000HP / ATCC 700724).